A 321-amino-acid polypeptide reads, in one-letter code: Aldose reductase C (321 aa).

An NADP(+)-binding site is contributed by 22 to 31; the sequence is GNQIPSIGLG. Tyr62 functions as the Proton donor in the catalytic mechanism. Position 124 (His124) interacts with substrate. 227 to 281 is an NADP(+) binding site; the sequence is SPLGQGKCDFFSNKILKSIAGKYKKSVANVIFKWLNQRGIAAIPKSGNHSRIIEN.

This sequence belongs to the aldo/keto reductase family.

The enzyme catalyses an alditol + NAD(+) = an aldose + NADH + H(+). It catalyses the reaction an alditol + NADP(+) = an aldose + NADPH + H(+). Functionally, catalyzes the NADPH-dependent reduction of a wide variety of carbonyl-containing compounds to their corresponding alcohols with a broad range of catalytic efficiencies. This chain is Aldose reductase C (alrC), found in Dictyostelium discoideum (Social amoeba).